We begin with the raw amino-acid sequence, 201 residues long: FMN-dependent NADH:quinone oxidoreductase (201 aa).

FMN-binding positions include S10, 16–18 (SQS), 96–99 (MYNF), and 140–143 (SRGG).

Belongs to the azoreductase type 1 family. In terms of assembly, homodimer. Requires FMN as cofactor.

It catalyses the reaction 2 a quinone + NADH + H(+) = 2 a 1,4-benzosemiquinone + NAD(+). It carries out the reaction N,N-dimethyl-1,4-phenylenediamine + anthranilate + 2 NAD(+) = 2-(4-dimethylaminophenyl)diazenylbenzoate + 2 NADH + 2 H(+). Functionally, quinone reductase that provides resistance to thiol-specific stress caused by electrophilic quinones. Also exhibits azoreductase activity. Catalyzes the reductive cleavage of the azo bond in aromatic azo compounds to the corresponding amines. The polypeptide is FMN-dependent NADH:quinone oxidoreductase (Yersinia pseudotuberculosis serotype O:1b (strain IP 31758)).